We begin with the raw amino-acid sequence, 85 residues long: Large ribosomal subunit protein bL27 (85 aa).

Residues 1-21 (MAHKKAGGSTRNGRDSRGKRL) are disordered.

Belongs to the bacterial ribosomal protein bL27 family.

The sequence is that of Large ribosomal subunit protein bL27 from Blochmanniella floridana.